Consider the following 130-residue polypeptide: DNA replication protein 16.7 (130 aa).

Residues 1 to 20 (MEAILMIGVITLCVIFLLSG) traverse the membrane as a helical segment. Residues 18 to 57 (LSGRNNKKIQEARELEDYLEDLNQRIAQRTQILSELNEVI) are a coiled coil. The segment at 70 to 130 (ACEIAVLDLY…QKKLYRGSLK (61 aa)) is DNA-binding.

The protein belongs to the phi29likevirus gp16.7 family. In terms of assembly, homodimer; homooligomer. Interacts with DNA; one dsDNA binding subunit is constituted by three p16.7 dimers.

Its subcellular location is the host cell membrane. Binds to the long stretches of ssDNA of the viral DNA replication intermediates created during the protein-primed mechanism of replication of the viral genome and attaches the viral DNA to the membrane of the infected cells. Required for the redistribution of replicating viral DNA from the initial replication site to membrane-associated sites surrounding the nucleoid. Required for the second pull step of DNA ejection. The polypeptide is DNA replication protein 16.7 (16.7) (Bacillus subtilis (Bacteriophage PZA)).